A 204-amino-acid chain; its full sequence is Putative uracil phosphoribosyltransferase urg2 (204 aa).

5-phospho-alpha-D-ribose 1-diphosphate-binding positions include Arg75, Arg100, and 126 to 134 (DPVMATGGT). D-ribose 5-phosphate is bound at residue Tyr187. Residues Leu188 and 193-195 (GDI) contribute to the uracil site. Asp194 contacts 5-phospho-alpha-D-ribose 1-diphosphate.

This sequence belongs to the UPRTase family. Mg(2+) serves as cofactor.

The protein resides in the cytoplasm. It localises to the nucleus. It catalyses the reaction UMP + diphosphate = 5-phospho-alpha-D-ribose 1-diphosphate + uracil. It participates in pyrimidine metabolism; UMP biosynthesis via salvage pathway; UMP from uracil: step 1/1. Its activity is regulated as follows. Allosterically activated by GTP. Its function is as follows. Catalyzes the conversion of uracil and 5-phospho-alpha-D-ribose 1-diphosphate (PRPP) to UMP and diphosphate. The polypeptide is Putative uracil phosphoribosyltransferase urg2 (Schizosaccharomyces pombe (strain 972 / ATCC 24843) (Fission yeast)).